Consider the following 283-residue polypeptide: MIINHNLSAVNAHRSLKFNELAVDKTMKALSSGMRINSAADDASGLAVSEKLRTQVNGLRQAERNTEDGMSFIQTAEGFLEQTSNIIQRIRVLAIQTSNGIYSNEDRQLVQVEVSALVDEVDRIASQAEFNKFKLFEGQFARGSRVASMWFHMGPNQNQRERFYIGTMTSKALKLVKADGRPIAISSPGEANDVIGLADAALTKIMKQRADMGAYYNRLEYTAKGLMGAYENMQASESRIRDADMAEEVVSLTTKQILVQSGTAMLAQANMKPNSVLKLLQQI.

It belongs to the bacterial flagellin family. In terms of assembly, the flagellum consists of two outer layers around a core that contains several antigenically related polypeptides.

Its subcellular location is the periplasmic flagellum. It is found in the periplasm. In terms of biological role, component of the core of the flagella. This is Flagellar filament 35 kDa core protein (flaB) from Leptospira interrogans serogroup Icterohaemorrhagiae serovar copenhageni (strain Fiocruz L1-130).